Here is a 139-residue protein sequence, read N- to C-terminus: Putative nickel-responsive regulator (139 aa).

Positions 79, 90, 92, and 98 each coordinate Ni(2+).

This sequence belongs to the transcriptional regulatory CopG/NikR family. Requires Ni(2+) as cofactor.

Transcriptional regulator. The polypeptide is Putative nickel-responsive regulator (Geobacter sp. (strain M21)).